The chain runs to 271 residues: Urease accessory protein UreD (271 aa).

This sequence belongs to the UreD family. As to quaternary structure, ureD, UreF and UreG form a complex that acts as a GTP-hydrolysis-dependent molecular chaperone, activating the urease apoprotein by helping to assemble the nickel containing metallocenter of UreC. The UreE protein probably delivers the nickel.

Its subcellular location is the cytoplasm. Its function is as follows. Required for maturation of urease via the functional incorporation of the urease nickel metallocenter. In Haemophilus influenzae (strain 86-028NP), this protein is Urease accessory protein UreD.